A 181-amino-acid polypeptide reads, in one-letter code: Large ribosomal subunit protein uL5 (181 aa).

This sequence belongs to the universal ribosomal protein uL5 family. Part of the 50S ribosomal subunit; part of the 5S rRNA/L5/L18/L25 subcomplex. Contacts the 5S rRNA and the P site tRNA. Forms a bridge to the 30S subunit in the 70S ribosome.

Its function is as follows. This is one of the proteins that bind and probably mediate the attachment of the 5S RNA into the large ribosomal subunit, where it forms part of the central protuberance. In the 70S ribosome it contacts protein S13 of the 30S subunit (bridge B1b), connecting the 2 subunits; this bridge is implicated in subunit movement. Contacts the P site tRNA; the 5S rRNA and some of its associated proteins might help stabilize positioning of ribosome-bound tRNAs. This chain is Large ribosomal subunit protein uL5, found in Desulforamulus reducens (strain ATCC BAA-1160 / DSM 100696 / MI-1) (Desulfotomaculum reducens).